Reading from the N-terminus, the 318-residue chain is 4-hydroxy-3-methylbut-2-enyl diphosphate reductase (318 aa).

Residue Cys12 coordinates [4Fe-4S] cluster. (2E)-4-hydroxy-3-methylbut-2-enyl diphosphate contacts are provided by His41 and His74. Positions 41 and 74 each coordinate dimethylallyl diphosphate. Isopentenyl diphosphate is bound by residues His41 and His74. Cys96 is a [4Fe-4S] cluster binding site. His124 provides a ligand contact to (2E)-4-hydroxy-3-methylbut-2-enyl diphosphate. Residue His124 participates in dimethylallyl diphosphate binding. His124 is an isopentenyl diphosphate binding site. Glu126 serves as the catalytic Proton donor. Thr168 is a binding site for (2E)-4-hydroxy-3-methylbut-2-enyl diphosphate. Cys198 is a binding site for [4Fe-4S] cluster. Positions 226, 227, 228, and 270 each coordinate (2E)-4-hydroxy-3-methylbut-2-enyl diphosphate. Ser226, Ser227, Asn228, and Ser270 together coordinate dimethylallyl diphosphate. Isopentenyl diphosphate-binding residues include Ser226, Ser227, Asn228, and Ser270.

Belongs to the IspH family. [4Fe-4S] cluster is required as a cofactor.

The catalysed reaction is isopentenyl diphosphate + 2 oxidized [2Fe-2S]-[ferredoxin] + H2O = (2E)-4-hydroxy-3-methylbut-2-enyl diphosphate + 2 reduced [2Fe-2S]-[ferredoxin] + 2 H(+). The enzyme catalyses dimethylallyl diphosphate + 2 oxidized [2Fe-2S]-[ferredoxin] + H2O = (2E)-4-hydroxy-3-methylbut-2-enyl diphosphate + 2 reduced [2Fe-2S]-[ferredoxin] + 2 H(+). The protein operates within isoprenoid biosynthesis; dimethylallyl diphosphate biosynthesis; dimethylallyl diphosphate from (2E)-4-hydroxy-3-methylbutenyl diphosphate: step 1/1. It participates in isoprenoid biosynthesis; isopentenyl diphosphate biosynthesis via DXP pathway; isopentenyl diphosphate from 1-deoxy-D-xylulose 5-phosphate: step 6/6. In terms of biological role, catalyzes the conversion of 1-hydroxy-2-methyl-2-(E)-butenyl 4-diphosphate (HMBPP) into a mixture of isopentenyl diphosphate (IPP) and dimethylallyl diphosphate (DMAPP). Acts in the terminal step of the DOXP/MEP pathway for isoprenoid precursor biosynthesis. This Psychrobacter sp. (strain PRwf-1) protein is 4-hydroxy-3-methylbut-2-enyl diphosphate reductase.